The primary structure comprises 112 residues: Macrodomain Ori protein (112 aa).

The tract at residues 91–112 (FHTLSGGKPQVEGAEDYTDSDD) is disordered. The segment covering 103-112 (GAEDYTDSDD) has biased composition (acidic residues).

The protein belongs to the MaoP family.

Its function is as follows. Involved in the organization of the Ori region of the chromosome into a macrodomain (MD). It constrains DNA mobility in the Ori macrodomain and limits long-distance DNA interactions with other chromosomal regions. The protein is Macrodomain Ori protein of Escherichia coli O157:H7.